A 273-amino-acid chain; its full sequence is Homeobox protein Hox-C13b (273 aa).

Residues 201–260 (GRKKRVPYTKIQLKELEKEYAASKFITKDRRRRISATTSLSERQVTIWFQNRRVKEKKFV) constitute a DNA-binding region (homeobox).

This sequence belongs to the Abd-B homeobox family.

The protein resides in the nucleus. Functionally, sequence-specific transcription factor which is part of a developmental regulatory system that provides cells with specific positional identities on the anterior-posterior axis. Plays a role in early embryonic development. This Danio rerio (Zebrafish) protein is Homeobox protein Hox-C13b (hoxc13b).